A 279-amino-acid polypeptide reads, in one-letter code: ATP synthase gamma chain (279 aa).

It belongs to the ATPase gamma chain family. In terms of assembly, F-type ATPases have 2 components, CF(1) - the catalytic core - and CF(0) - the membrane proton channel. CF(1) has five subunits: alpha(3), beta(3), gamma(1), delta(1), epsilon(1). CF(0) has three main subunits: a, b and c.

It is found in the cell membrane. Produces ATP from ADP in the presence of a proton gradient across the membrane. The gamma chain is believed to be important in regulating ATPase activity and the flow of protons through the CF(0) complex. The polypeptide is ATP synthase gamma chain (Mycoplasmopsis pulmonis (strain UAB CTIP) (Mycoplasma pulmonis)).